The chain runs to 507 residues: Maturase K (507 aa).

Belongs to the intron maturase 2 family. MatK subfamily.

It is found in the plastid. Its subcellular location is the chloroplast. In terms of biological role, usually encoded in the trnK tRNA gene intron. Probably assists in splicing its own and other chloroplast group II introns. The protein is Maturase K of Ranunculus repens (Creeping buttercup).